The chain runs to 396 residues: Bone morphogenetic protein 2 (396 aa).

The N-terminal stretch at Met1–Gly23 is a signal peptide. The propeptide at Leu24–Arg282 is cleaved by PCSK5. Ser87 is modified (phosphoserine). 4 N-linked (GlcNAc...) asparagine glycosylation sites follow: Asn135, Asn163, Asn164, and Asn200. Positions Lys272–Lys293 are disordered. Positions His274–Lys293 are enriched in basic residues. Cystine bridges form between Cys296–Cys361, Cys325–Cys393, and Cys329–Cys395. N-linked (GlcNAc...) asparagine glycosylation is present at Asn338.

This sequence belongs to the TGF-beta family. As to quaternary structure, homodimer; disulfide-linked. Interacts with SOSTDC1. Interacts with GREM2, RGMA, RGMB and RGMC. Interacts with ASPN. Interacts with MAFP5. Interacts with FBN1 (via N-terminal domain) and FBN2. Interacts with type I receptor BMPR1A. Interacts with type II receptor BMPR2. Interacts with ERFE. Interacts with BMPR1A/ALK3; the interaction may induce HAMP expression. Interacts with TGFBR3.

The protein resides in the secreted. Functionally, growth factor of the TGF-beta superfamily that plays essential roles in many developmental processes, including cardiogenesis, neurogenesis, and osteogenesis. Induces cartilage and bone formation. Initiates the canonical BMP signaling cascade by associating with type I receptor BMPR1A and type II receptor BMPR2. Once all three components are bound together in a complex at the cell surface, BMPR2 phosphorylates and activates BMPR1A. In turn, BMPR1A propagates signal by phosphorylating SMAD1/5/8 that travel to the nucleus and act as activators and repressors of transcription of target genes. Also acts to promote expression of HAMP, via the interaction with its receptor BMPR1A/ALK3. Can also signal through non-canonical pathways such as ERK/MAP kinase signaling cascade that regulates osteoblast differentiation. Also stimulates the differentiation of myoblasts into osteoblasts via the EIF2AK3-EIF2A-ATF4 pathway by stimulating EIF2A phosphorylation which leads to increased expression of ATF4 which plays a central role in osteoblast differentiation. Acts as a positive regulator of odontoblast differentiation during mesenchymal tooth germ formation, expression is repressed during the bell stage by MSX1-mediated inhibition of CTNNB1 signaling. In Dama dama (Fallow deer), this protein is Bone morphogenetic protein 2 (BMP2).